Reading from the N-terminus, the 1388-residue chain is DNA-directed RNA polymerase subunit beta (1388 aa).

Belongs to the RNA polymerase beta chain family. In terms of assembly, the RNAP catalytic core consists of 2 alpha, 1 beta, 1 beta' and 1 omega subunit. When a sigma factor is associated with the core the holoenzyme is formed, which can initiate transcription.

It catalyses the reaction RNA(n) + a ribonucleoside 5'-triphosphate = RNA(n+1) + diphosphate. Functionally, DNA-dependent RNA polymerase catalyzes the transcription of DNA into RNA using the four ribonucleoside triphosphates as substrates. This is DNA-directed RNA polymerase subunit beta from Stenotrophomonas maltophilia (strain K279a).